The sequence spans 630 residues: Telomere repeat-binding protein 5 (630 aa).

3 disordered regions span residues 1–38 (MVLQ…SENH), 56–78 (EGGN…CAVK), and 308–327 (YTAS…GSPR). The span at 57–71 (GGNSSSSSNNTSGNN) shows a compositional bias: low complexity. Polar residues predominate over residues 309 to 325 (TASQSEETNKNEGQSGS). The Ubiquitin-like domain maps to 354 to 433 (VKLGIKSFRV…SDTLGFCLEP (80 aa)). Residues 463-489 (LPSPGKHAKPSNSVESDLDSKPSAPNR) are disordered. The HTH myb-type domain maps to 523–582 (AQRRIRRPFSVAEVEALVQAVERLGTGRWRDVKLRAFDNAKHRTYVDLKDKWKTLVHTAR). A DNA-binding region (H-T-H motif) is located at residues 551 to 578 (WRDVKLRAFDNAKHRTYVDLKDKWKTLV).

Homodimer. Expressed ubiquitously.

It localises to the nucleus. In terms of biological role, binds specifically to the plant telomeric double-stranded DNA sequences. At least 6 repeats of telomeric sequences are required for binding. The protein is Telomere repeat-binding protein 5 (TRP5) of Arabidopsis thaliana (Mouse-ear cress).